The sequence spans 428 residues: Methyl-branched lipid omega-hydroxylase (428 aa).

Cys379 provides a ligand contact to heme.

Belongs to the cytochrome P450 family. Requires heme as cofactor.

The enzyme catalyses a methyl-branched lipid + O2 + 2 reduced ferredoxin [iron-sulfur] cluster + 2 H(+) = an omega-hydroxy-methyl-branched lipid + H2O + 2 oxidized ferredoxin [iron-sulfur] cluster.. The catalysed reaction is cholest-4-en-3-one + 6 reduced [2Fe-2S]-[ferredoxin] + 3 O2 + 5 H(+) = (25R)-3-oxocholest-4-en-26-oate + 6 oxidized [2Fe-2S]-[ferredoxin] + 4 H2O. It participates in lipid metabolism; branched-chain fatty acid metabolism. Primarily hydroxylates the omega-carbon of a number of methyl-branched lipids, including (2E,6E)-farnesol, phytanate, geranylgeraniol, 15-methylpalmitate and (2E,6E)-farnesyl diphosphate. Also catalyzes the sequential oxidation of the terminal methyl of cholest-4-en-3-one into (25R)-26-hydroxycholest-4-en-3-one (alcohol), (25R)-26-oxocholest-4-en-3-one (aldehyde), to finally yield the carboxylic acid (25R)-3-oxocholest-4-en-26-oate. Also able to sequentially oxidize cholesterol itself, not only cholest-4-en-3-one. The polypeptide is Methyl-branched lipid omega-hydroxylase (cyp124) (Mycobacterium bovis (strain ATCC BAA-935 / AF2122/97)).